The primary structure comprises 526 residues: Exodeoxyribonuclease 7 large subunit (526 aa).

The disordered stretch occupies residues 497 to 526; the sequence is AMTTEGGTPPAGAKKRSTKPAEPPKQGSLF.

The protein belongs to the XseA family. As to quaternary structure, heterooligomer composed of large and small subunits.

The protein localises to the cytoplasm. The enzyme catalyses Exonucleolytic cleavage in either 5'- to 3'- or 3'- to 5'-direction to yield nucleoside 5'-phosphates.. Bidirectionally degrades single-stranded DNA into large acid-insoluble oligonucleotides, which are then degraded further into small acid-soluble oligonucleotides. The polypeptide is Exodeoxyribonuclease 7 large subunit (Rhizobium johnstonii (strain DSM 114642 / LMG 32736 / 3841) (Rhizobium leguminosarum bv. viciae)).